We begin with the raw amino-acid sequence, 240 residues long: Large ribosomal subunit protein bL25 (240 aa).

The tract at residues M1–E23 is disordered. Residues T10–A19 are compositionally biased toward low complexity.

This sequence belongs to the bacterial ribosomal protein bL25 family. CTC subfamily. As to quaternary structure, part of the 50S ribosomal subunit; part of the 5S rRNA/L5/L18/L25 subcomplex. Contacts the 5S rRNA. Binds to the 5S rRNA independently of L5 and L18.

Functionally, this is one of the proteins that binds to the 5S RNA in the ribosome where it forms part of the central protuberance. The chain is Large ribosomal subunit protein bL25 from Afipia carboxidovorans (strain ATCC 49405 / DSM 1227 / KCTC 32145 / OM5) (Oligotropha carboxidovorans).